The sequence spans 391 residues: Putative ABC transporter glucose-binding protein TsgA13 (391 aa).

The signal sequence occupies residues 1–28; that stretch reads MLDEESSIQRRDVLSALGAAGVTTLAGC. A disordered region spans residues 24-71; it reads TLAGCTGGDTGDTDDTEASETTASEGTTSGTTTGDVETTDGGGPSEGE. Residues 42–59 are compositionally biased toward low complexity; sequence SETTASEGTTSGTTTGDV.

The protein belongs to the BMP lipoprotein family. As to quaternary structure, the complex is composed of two ATP-binding proteins (TsgD13), two transmembrane proteins (TsgB13 and TsgC13) and a solute-binding protein (TsgA13).

Part of an ABC transporter complex involved in glucose import. This Haloferax volcanii (strain ATCC 29605 / DSM 3757 / JCM 8879 / NBRC 14742 / NCIMB 2012 / VKM B-1768 / DS2) (Halobacterium volcanii) protein is Putative ABC transporter glucose-binding protein TsgA13 (tsgA13).